The following is a 335-amino-acid chain: Ferrochelatase (335 aa).

The Fe cation site is built by H207 and E288.

This sequence belongs to the ferrochelatase family.

The protein resides in the cytoplasm. It catalyses the reaction heme b + 2 H(+) = protoporphyrin IX + Fe(2+). Its pathway is porphyrin-containing compound metabolism; protoheme biosynthesis; protoheme from protoporphyrin-IX: step 1/1. Catalyzes the ferrous insertion into protoporphyrin IX. This chain is Ferrochelatase, found in Helicobacter pylori (strain G27).